A 453-amino-acid chain; its full sequence is Tryptophan biosynthesis protein TrpCF (453 aa).

The tract at residues M1–E257 is indole-3-glycerol phosphate synthase. The N-(5'-phosphoribosyl)anthranilate isomerase stretch occupies residues N258 to Y453.

This sequence in the N-terminal section; belongs to the TrpC family. In the C-terminal section; belongs to the TrpF family.

The catalysed reaction is N-(5-phospho-beta-D-ribosyl)anthranilate = 1-(2-carboxyphenylamino)-1-deoxy-D-ribulose 5-phosphate. The enzyme catalyses 1-(2-carboxyphenylamino)-1-deoxy-D-ribulose 5-phosphate + H(+) = (1S,2R)-1-C-(indol-3-yl)glycerol 3-phosphate + CO2 + H2O. Its pathway is amino-acid biosynthesis; L-tryptophan biosynthesis; L-tryptophan from chorismate: step 3/5. It functions in the pathway amino-acid biosynthesis; L-tryptophan biosynthesis; L-tryptophan from chorismate: step 4/5. Functionally, bifunctional enzyme that catalyzes two sequential steps of tryptophan biosynthetic pathway. The first reaction is catalyzed by the isomerase, coded by the TrpF domain; the second reaction is catalyzed by the synthase, coded by the TrpC domain. In Buchnera aphidicola subsp. Diuraphis noxia, this protein is Tryptophan biosynthesis protein TrpCF (trpC).